The following is a 324-amino-acid chain: Kelch domain-containing protein AF_2170 (324 aa).

Kelch repeat units follow at residues 229–276 and 277–323; these read YIFA…VGGE and YIYI…NNGK.

This is Kelch domain-containing protein AF_2170 from Archaeoglobus fulgidus (strain ATCC 49558 / DSM 4304 / JCM 9628 / NBRC 100126 / VC-16).